The primary structure comprises 71 residues: Long neurotoxin 3 (71 aa).

Cystine bridges form between Cys3/Cys20, Cys14/Cys41, Cys26/Cys30, Cys45/Cys56, and Cys57/Cys62.

This sequence belongs to the three-finger toxin family. Long-chain subfamily. Type II alpha-neurotoxin sub-subfamily. In terms of tissue distribution, expressed by the venom gland.

Its subcellular location is the secreted. Binds with high affinity to muscular (alpha-1/CHRNA1) and neuronal (alpha-7/CHRNA7) nicotinic acetylcholine receptor (nAChR) and inhibits acetylcholine from binding to the receptor, thereby impairing neuromuscular and neuronal transmission. In Naja naja (Indian cobra), this protein is Long neurotoxin 3.